A 359-amino-acid chain; its full sequence is 4-hydroxy-3-methylbut-2-en-1-yl diphosphate synthase (flavodoxin) (359 aa).

The [4Fe-4S] cluster site is built by Cys-264, Cys-267, Cys-299, and Glu-306.

Belongs to the IspG family. The cofactor is [4Fe-4S] cluster.

The enzyme catalyses (2E)-4-hydroxy-3-methylbut-2-enyl diphosphate + oxidized [flavodoxin] + H2O + 2 H(+) = 2-C-methyl-D-erythritol 2,4-cyclic diphosphate + reduced [flavodoxin]. It functions in the pathway isoprenoid biosynthesis; isopentenyl diphosphate biosynthesis via DXP pathway; isopentenyl diphosphate from 1-deoxy-D-xylulose 5-phosphate: step 5/6. Functionally, converts 2C-methyl-D-erythritol 2,4-cyclodiphosphate (ME-2,4cPP) into 1-hydroxy-2-methyl-2-(E)-butenyl 4-diphosphate. The polypeptide is 4-hydroxy-3-methylbut-2-en-1-yl diphosphate synthase (flavodoxin) (Helicobacter pylori (strain ATCC 700392 / 26695) (Campylobacter pylori)).